The following is a 394-amino-acid chain: Dual-specificity RNA methyltransferase RlmN (394 aa).

The Proton acceptor role is filled by glutamate 115. Residues 121 to 360 (EADRATLCVS…VIVRKTRGDD (240 aa)) enclose the Radical SAM core domain. A disulfide bridge links cysteine 128 with cysteine 365. Residues cysteine 135, cysteine 139, and cysteine 142 each coordinate [4Fe-4S] cluster. S-adenosyl-L-methionine is bound by residues 189–190 (GE), serine 221, 243–245 (SLH), and asparagine 322. Cysteine 365 (S-methylcysteine intermediate) is an active-site residue.

The protein belongs to the radical SAM superfamily. RlmN family. [4Fe-4S] cluster is required as a cofactor.

Its subcellular location is the cytoplasm. It catalyses the reaction adenosine(2503) in 23S rRNA + 2 reduced [2Fe-2S]-[ferredoxin] + 2 S-adenosyl-L-methionine = 2-methyladenosine(2503) in 23S rRNA + 5'-deoxyadenosine + L-methionine + 2 oxidized [2Fe-2S]-[ferredoxin] + S-adenosyl-L-homocysteine. The enzyme catalyses adenosine(37) in tRNA + 2 reduced [2Fe-2S]-[ferredoxin] + 2 S-adenosyl-L-methionine = 2-methyladenosine(37) in tRNA + 5'-deoxyadenosine + L-methionine + 2 oxidized [2Fe-2S]-[ferredoxin] + S-adenosyl-L-homocysteine. Its function is as follows. Specifically methylates position 2 of adenine 2503 in 23S rRNA and position 2 of adenine 37 in tRNAs. m2A2503 modification seems to play a crucial role in the proofreading step occurring at the peptidyl transferase center and thus would serve to optimize ribosomal fidelity. The polypeptide is Dual-specificity RNA methyltransferase RlmN (Pasteurella multocida (strain Pm70)).